We begin with the raw amino-acid sequence, 341 residues long: tRNA N6-adenosine threonylcarbamoyltransferase (341 aa).

Residues histidine 114 and histidine 118 each coordinate Fe cation. Substrate is bound by residues 136–140, aspartate 169, glycine 182, aspartate 186, and asparagine 278; that span reads LVSGG. Residue aspartate 304 coordinates Fe cation.

The protein belongs to the KAE1 / TsaD family. Requires Fe(2+) as cofactor.

It localises to the cytoplasm. The catalysed reaction is L-threonylcarbamoyladenylate + adenosine(37) in tRNA = N(6)-L-threonylcarbamoyladenosine(37) in tRNA + AMP + H(+). Functionally, required for the formation of a threonylcarbamoyl group on adenosine at position 37 (t(6)A37) in tRNAs that read codons beginning with adenine. Is involved in the transfer of the threonylcarbamoyl moiety of threonylcarbamoyl-AMP (TC-AMP) to the N6 group of A37, together with TsaE and TsaB. TsaD likely plays a direct catalytic role in this reaction. The sequence is that of tRNA N6-adenosine threonylcarbamoyltransferase from Lactococcus lactis subsp. cremoris (strain SK11).